Reading from the N-terminus, the 113-residue chain is MNRQPMFFILIVLLFTVFSLKEFIPNTFCIHPKEGIIHLEKEHPKTFCEKDEVHVKVLSEIKNLKVQLDLDKSFSFTSPFRISLSFVVLKKQNALPEKSPRRESPIKTVRLLI.

The chain crosses the membrane as a helical span at residues 7 to 29; that stretch reads FFILIVLLFTVFSLKEFIPNTFC.

It is found in the membrane. This is an uncharacterized protein from Aquifex aeolicus (strain VF5).